Consider the following 209-residue polypeptide: MELNSLLLLLEAAEYLERRDREAEHGYASMLPFDGDFARKKTKTAGLVRKGPNNRSSHNELEKHRRAKLRLYLEQLKQLGPLGPDSTRHTTLSLLKRAKMHIKKLEEQDRRALSIKEQLQREHRFLKRRLEQLSVQSVERVRTDSTGSAVSTDDSEQEVDIEGMEFGPGELDSAGSSSDADDHYSLQSSGCSDSSYGHPCRRPGCPGLS.

An interaction with SIN3A and SIN3B region spans residues 6-23 (LLLLLEAAEYLERRDREA). A bHLH domain is found at 53–105 (NNRSSHNELEKHRRAKLRLYLEQLKQLGPLGPDSTRHTTLSLLKRAKMHIKKL). The tract at residues 137-209 (SVERVRTDST…CRRPGCPGLS (73 aa)) is disordered. A compositionally biased stretch (acidic residues) spans 153-163 (DDSEQEVDIEG). Residues 185–195 (SLQSSGCSDSS) are compositionally biased toward polar residues.

Efficient DNA binding requires dimerization with another bHLH protein. Binds DNA as a heterodimer with MAX. Interacts with SIN3A AND SIN3B. Interacts with RNF17.

The protein resides in the nucleus. Transcriptional repressor. Binds with MAX to form a sequence-specific DNA-binding protein complex which recognizes the core sequence 5'-CAC[GA]TG-3'. Antagonizes MYC transcriptional activity by competing for MAX and suppresses MYC dependent cell transformation. This is Max dimerization protein 4 (Mxd4) from Mus musculus (Mouse).